Consider the following 129-residue polypeptide: Cytochrome c oxidase subunit 13, mitochondrial (129 aa).

The transit peptide at 1-9 (MFRQCAKRY) directs the protein to the mitochondrion. Residues 10–43 (ASSLPPNALKPAFGPPDKVAAQKFKESLMATEKH) lie on the Mitochondrial matrix side of the membrane. The helical transmembrane segment at 44–71 (AKDTSNMWVKISVWVALPAIALTAVNTY) threads the bilayer. At 72 to 129 (FVEKEHAEHREHLKHVPDSEWPRDYEFMNIRSKPFFWGDGDKTLFWNPVVNRHIEHDD) the chain is on the mitochondrial intermembrane side.

The protein belongs to the cytochrome c oxidase subunit 6A family. In terms of assembly, component of the cytochrome c oxidase (complex IV, CIV), a multisubunit enzyme composed of 12 subunits. The complex is composed of a catalytic core of 3 subunits COX1, COX2 and COX3, encoded in the mitochondrial DNA, and 9 supernumerary subunits COX4, COX5A (or COX5B), COX6, COX7, COX8, COX9, COX12, COX13 and COX26, which are encoded in the nuclear genome. The complex exists as a monomer or a dimer and forms supercomplexes (SCs) in the inner mitochondrial membrane with a dimer of ubiquinol-cytochrome c oxidoreductase (cytochrome b-c1 complex, complex III, CIII), resulting in 2 different assemblies (supercomplexes III(2)IV and III(2)IV(2)). COX13 interacts with COX1 and COX3 on the intermembrane space (IMS) and COX4 on the matrix side.

It is found in the mitochondrion inner membrane. It functions in the pathway energy metabolism; oxidative phosphorylation. Functionally, component of the cytochrome c oxidase, the last enzyme in the mitochondrial electron transport chain which drives oxidative phosphorylation. The respiratory chain contains 3 multisubunit complexes succinate dehydrogenase (complex II, CII), ubiquinol-cytochrome c oxidoreductase (cytochrome b-c1 complex, complex III, CIII) and cytochrome c oxidase (complex IV, CIV), that cooperate to transfer electrons derived from NADH and succinate to molecular oxygen, creating an electrochemical gradient over the inner membrane that drives transmembrane transport and the ATP synthase. Cytochrome c oxidase is the component of the respiratory chain that catalyzes the reduction of oxygen to water. Electrons originating from reduced cytochrome c in the intermembrane space (IMS) are transferred via the dinuclear copper A center (CU(A)) of COX2 and heme A of COX1 to the active site in COX1, a binuclear center (BNC) formed by heme A3 and copper B (CU(B)). The BNC reduces molecular oxygen to 2 water molecules using 4 electrons from cytochrome c in the IMS and 4 protons from the mitochondrial matrix. In Saccharomyces cerevisiae (strain ATCC 204508 / S288c) (Baker's yeast), this protein is Cytochrome c oxidase subunit 13, mitochondrial (COX13).